A 169-amino-acid polypeptide reads, in one-letter code: MLAEPINLQSWISENKDLLQPPVNNYCLHRGGATVMIVGGPNERTDYHVNQTPEYFHQIKGDMTLKVVDDGKFRDITIREGDSFLLPGNVPHNPVRYADTIGLVVEQDRPKGVNDKIRWYCSNCREIVHQVEFYCYDLGTQVKDAILAFDGDDEARTCKCGTYNYSRPN.

Arg-44 serves as a coordination point for O2. Fe cation-binding residues include His-48, Glu-54, and His-92. Glu-54 contributes to the substrate binding site. Residues Arg-96 and Glu-106 each coordinate substrate. Residues Cys-121, Cys-124, Cys-158, and Cys-160 each contribute to the a divalent metal cation site.

The protein belongs to the 3-HAO family. The cofactor is Fe(2+).

The protein resides in the cytoplasm. The catalysed reaction is 3-hydroxyanthranilate + O2 = (2Z,4Z)-2-amino-3-carboxymuconate 6-semialdehyde. It functions in the pathway cofactor biosynthesis; NAD(+) biosynthesis; quinolinate from L-kynurenine: step 3/3. Its function is as follows. Catalyzes the oxidative ring opening of 3-hydroxyanthranilate to 2-amino-3-carboxymuconate semialdehyde, which spontaneously cyclizes to quinolinate. This chain is 3-hydroxyanthranilate 3,4-dioxygenase, found in Meyerozyma guilliermondii (strain ATCC 6260 / CBS 566 / DSM 6381 / JCM 1539 / NBRC 10279 / NRRL Y-324) (Yeast).